Here is a 317-residue protein sequence, read N- to C-terminus: MKILAIESSCDEFSISIIDDGKILTNIISSQIDQHVNFGGVVPELAARLHLENISWVIKSALESSNTKIEEIDHVAYTEKPGLIGSLIIGKLVAETIASYIDKPLMPLHHIEGHIYGASIENEFVYPVLAMVVSGGHTQIEIVNSPNEFEVIGATLDDAIGECYDKVARVMGLGYPGGPKIDKLAQKGNKEAFIFPISKNDDSYDFSYSGLKTAVINIIHNLTQKGEEIPVADIAASFQYAATKIVEKKLEKAIIQFKPKTLTVAGGVSANSEIRNIIMSLGKKYNITNTFVPKMEYCTDNAAMIAKLAYEKLKSSN.

2 residues coordinate Fe cation: histidine 110 and histidine 114. Substrate-binding positions include 132 to 136 (VVSGG), aspartate 165, glycine 178, aspartate 182, and asparagine 271. Aspartate 300 contributes to the Fe cation binding site.

Belongs to the KAE1 / TsaD family. Fe(2+) serves as cofactor.

The protein localises to the cytoplasm. The catalysed reaction is L-threonylcarbamoyladenylate + adenosine(37) in tRNA = N(6)-L-threonylcarbamoyladenosine(37) in tRNA + AMP + H(+). Functionally, required for the formation of a threonylcarbamoyl group on adenosine at position 37 (t(6)A37) in tRNAs that read codons beginning with adenine. Is involved in the transfer of the threonylcarbamoyl moiety of threonylcarbamoyl-AMP (TC-AMP) to the N6 group of A37, together with TsaE and TsaB. TsaD likely plays a direct catalytic role in this reaction. This is tRNA N6-adenosine threonylcarbamoyltransferase from Mesoplasma florum (strain ATCC 33453 / NBRC 100688 / NCTC 11704 / L1) (Acholeplasma florum).